Consider the following 254-residue polypeptide: Leucyl/phenylalanyl-tRNA--protein transferase (254 aa).

Residues 1-10 (MSSQPPPLPW) show a composition bias toward pro residues. The tract at residues 1–28 (MSSQPPPLPWLDPNQDFPPTSQAWDENS) is disordered.

It belongs to the L/F-transferase family.

It is found in the cytoplasm. The enzyme catalyses N-terminal L-lysyl-[protein] + L-leucyl-tRNA(Leu) = N-terminal L-leucyl-L-lysyl-[protein] + tRNA(Leu) + H(+). It carries out the reaction N-terminal L-arginyl-[protein] + L-leucyl-tRNA(Leu) = N-terminal L-leucyl-L-arginyl-[protein] + tRNA(Leu) + H(+). It catalyses the reaction L-phenylalanyl-tRNA(Phe) + an N-terminal L-alpha-aminoacyl-[protein] = an N-terminal L-phenylalanyl-L-alpha-aminoacyl-[protein] + tRNA(Phe). Functionally, functions in the N-end rule pathway of protein degradation where it conjugates Leu, Phe and, less efficiently, Met from aminoacyl-tRNAs to the N-termini of proteins containing an N-terminal arginine or lysine. The protein is Leucyl/phenylalanyl-tRNA--protein transferase of Albidiferax ferrireducens (strain ATCC BAA-621 / DSM 15236 / T118) (Rhodoferax ferrireducens).